The chain runs to 294 residues: Aquaporin-B (294 aa).

Residues 1 to 31 are disordered; that stretch reads MSLKRSDDYQDLEEGIAMEDGGNIKDEEEKP. The Cytoplasmic portion of the chain corresponds to 1 to 42; sequence MSLKRSDDYQDLEEGIAMEDGGNIKDEEEKPLDPIEEQNKKR. Residues 22–31 show a composition bias toward basic and acidic residues; it reads GNIKDEEEKP. The chain crosses the membrane as a helical span at residues 43–63; it reads WVLIRAVLGELLCTFLFVYVL. Residues 64-79 lie on the Extracellular side of the membrane; the sequence is CATSANFIRLGSPPNP. Ser-75 carries O-linked (GalNAc...) serine glycosylation. The helical transmembrane segment at 80-100 threads the bilayer; it reads VVGGLSTGFAAVALIYSFADV. The Cytoplasmic segment spans residues 101-123; the sequence is SGAHFNPAVTFATCVTRKTSITK. The short motif at 106 to 108 is the NPA 1 element; the sequence is NPA. Residues 124–144 traverse the membrane as a helical segment; the sequence is GLMYVGAQLVGSVLASLILLA. Residues 145–172 are Extracellular-facing; that stretch reads TFPGNFPGDKNAASAVAIAPSTDANIGN. A helical membrane pass occupies residues 173–193; sequence AFLTELVLTFILVYVIFAVAF. At 194-224 the chain is on the cytoplasmic side; it reads DTVDNSVKTKVVGKSSSNNLTIYTTSGQTKA. The interval 208 to 219 is required for water permeability; sequence SSSNNLTIYTTS. A helical transmembrane segment spans residues 225–245; sequence GFAPIAIGFTLGFLCFLGGSV. At 246–268 the chain is on the extracellular side; sequence SGGAFNPARVFGTALVGNNWTRH. The NPA 2 motif lies at 251–253; the sequence is NPA. The helical transmembrane segment at 269–289 threads the bilayer; it reads WMYWIADFLGAGLAGFAQKFF. Residues 290-294 are Cytoplasmic-facing; the sequence is SSTHK.

The protein belongs to the MIP/aquaporin (TC 1.A.8) family. In terms of processing, glycosylated and non-glycosylated forms exist throughout all developmental stages.

Its subcellular location is the cell membrane. The protein resides in the cytoplasmic vesicle. Its function is as follows. Putatively gated water-specific channel, requiring a cysteine residue within the channel. Impermeable to water, glycerol and urea when expressed in Xenopus oocytes. Not regulated by pH; channels remain impermeable to water at pH 7.4 and 5.2. The polypeptide is Aquaporin-B (Dictyostelium discoideum (Social amoeba)).